The primary structure comprises 952 residues: Meiosis-specific coiled-coil domain-containing protein MEIOC (952 aa).

3 disordered regions span residues 1–23 (MEVR…EGLE), 609–629 (QAKP…LDGL), and 933–952 (VHES…TNKH). A compositionally biased stretch (basic and acidic residues) spans 617-627 (YDPEEGPKHLD). The span at 936–952 (SINSSNPMNQRGETNKH) shows a compositional bias: polar residues.

As to quaternary structure, interacts with YTHDC2; binds transcript that regulate the mitotic cell cycle inhibiting progression into metaphase, thereby allowing meiotic prophase to proceed normally. Interacts with RBM46. In terms of tissue distribution, expressed in fetal ovaries. Expressed in testis.

The protein resides in the cytoplasm. It is found in the nucleus. In terms of biological role, is required for meiosis completion in both male and female germ cells. Confers stability to numerous meiotic mRNAs in gonads allowing proper initiation and progression into meiosis prophase I. The function may involve YTHDC2 and is independent of induction by retinoic acid (RA). Maintains an extended meiotic prophase I by properly promoting the transition from a mitotic to a meiotic cell cycle program by binding transcripts through its interaction with YTHDC2 that regulate the mitotic cell cycle. The sequence is that of Meiosis-specific coiled-coil domain-containing protein MEIOC from Homo sapiens (Human).